The sequence spans 274 residues: Kit ligand (274 aa).

A signal peptide spans 1–25 (MKKTQTWIITCIYLQLLLFNPLVHT). At glutamine 26 the chain carries Pyrrolidone carboxylic acid. The Extracellular portion of the chain corresponds to 26-215 (QGICSNRVTD…SNSIEDSSLQ (190 aa)). 2 cysteine pairs are disulfide-bonded: cysteine 29–cysteine 114 and cysteine 68–cysteine 164. N-linked (GlcNAc...) asparagine glycosylation is found at asparagine 90, asparagine 145, and asparagine 196. Residues 216-238 (WAAVALPAFFSLVIGFAFGAFYW) traverse the membrane as a helical segment. Over 239-274 (KKKQPNLTRTVENRQINEEDNEISMLQEKEREFQEV) the chain is Cytoplasmic.

The protein belongs to the SCF family. Homodimer, non-covalently linked. In terms of processing, a soluble form is produced by proteolytic processing of isoform 1 in the extracellular domain.

It is found in the cell membrane. The protein localises to the cytoplasm. It localises to the cytoskeleton. Its subcellular location is the cell projection. The protein resides in the lamellipodium. It is found in the filopodium. The protein localises to the secreted. Functionally, stimulates the proliferation of mast cells. Able to augment the proliferation of both myeloid and lymphoid hematopoietic progenitors in bone marrow culture. Also mediates cell-cell adhesion. Acts synergistically with other cytokines, probably interleukins. This is Kit ligand (KITLG) from Bos taurus (Bovine).